Consider the following 238-residue polypeptide: Purine nucleoside phosphorylase DeoD-type (238 aa).

A purine D-ribonucleoside is bound at residue H5. Phosphate-binding positions include G21, R25, R44, and 88-91; that span reads RVGS. Residues 180–182 and 204–205 each bind a purine D-ribonucleoside; these read EME and SD. D205 (proton donor) is an active-site residue.

This sequence belongs to the PNP/UDP phosphorylase family. As to quaternary structure, homohexamer; trimer of homodimers.

It carries out the reaction a purine D-ribonucleoside + phosphate = a purine nucleobase + alpha-D-ribose 1-phosphate. It catalyses the reaction a purine 2'-deoxy-D-ribonucleoside + phosphate = a purine nucleobase + 2-deoxy-alpha-D-ribose 1-phosphate. In terms of biological role, catalyzes the reversible phosphorolytic breakdown of the N-glycosidic bond in the beta-(deoxy)ribonucleoside molecules, with the formation of the corresponding free purine bases and pentose-1-phosphate. This chain is Purine nucleoside phosphorylase DeoD-type, found in Proteus mirabilis (strain HI4320).